The chain runs to 233 residues: Antiholin-like protein LrgB (233 aa).

The next 7 helical transmembrane spans lie at 7–27 (INTPYFGILLSLIPFIIATFL), 33–53 (GFFLFTPLFVSMVVGIAFLKL), 63–83 (IGGDIINFFLEPATICFAIPL), 97–117 (ILGGITLGTTAALVCIYLIAE), 124–144 (GIIASMLPQGATTAIALPVSA), 152–172 (LTSLAVILNGVIIYALGSKLI), and 212–232 (ISLVIVGVIVVIVAPILATLL).

Belongs to the CidB/LrgB family. LrgB subfamily.

It is found in the cell membrane. Functionally, inhibits the expression or activity of extracellular murein hydrolases by interacting, possibly with LrgA, with the holin-like proteins CidA and/or CidB. The LrgAB and CidAB proteins may affect the proton motive force of the membrane. May be involved in programmed cell death (PCD), possibly triggering PCD in response to antibiotics and environmental stresses. The chain is Antiholin-like protein LrgB from Staphylococcus saprophyticus subsp. saprophyticus (strain ATCC 15305 / DSM 20229 / NCIMB 8711 / NCTC 7292 / S-41).